The primary structure comprises 159 residues: Cyclin-dependent kinase inhibitor 1 (159 aa).

Ser-2 bears the N-acetylserine mark. Ser-2 is covalently cross-linked (Glycyl serine ester (Ser-Gly) (interchain with G-Cter in ubiquitin)). Residues 12 to 40 (HRSKVCRCLFGPVDSEQLRRDCDALMAGC) form a C4-type zinc finger. Residues 17-24 (CRCLFGPV) form a required for binding cyclins region. Residues 53–58 (VTETPL) form a required for binding CDKs region. Ser-78 is modified (phosphoserine; by NUAK1). Residues 78–106 (SPGSRSRDDLGGDKRPSTSSALLQGPAPE) are disordered. The span at 82–93 (RSRDDLGGDKRP) shows a compositional bias: basic and acidic residues. The residue at position 112 (Ser-112) is a Phosphoserine; by GSK3-beta. The tract at residues 118-142 (VSERPEDSPGGPGTSQGRKRRQTSL) is disordered. Ser-125 is modified (phosphoserine). A PIP-box K+4 motif motif is present at residues 135–159 (RKRRQTSLTDFYHSKRRLVFCKRKP). Position 140 is a phosphothreonine; by PKA, PKB/AKT1, PIM1 and PIM2 (Thr-140). Ser-141 is modified (phosphoserine; by NUAK1). Positions 147–159 (HSKRRLVFCKRKP) are interaction with TRIM39.

Belongs to the CDI family. Interacts with HDAC1; the interaction is prevented by competitive binding of C10orf90/FATS to HDAC1 facilitating acetylation and protein stabilization of CDKN1A/p21. Interacts with MKRN1. Interacts with PSMA3. Interacts with PCNA. Component of the ternary complex, cyclin D-CDK4-CDKN1A. Interacts (via its N-terminal domain) with CDK4; the interaction promotes the assembly of the cyclin D-CDK4 complex, its nuclear translocation and promotes the cyclin D-dependent enzyme activity of CDK4. Binding to CDK2 leads to CDK2/cyclin E inactivation at the G1-S phase DNA damage checkpoint, thereby arresting cells at the G1-S transition during DNA repair. Interacts with PIM1. Interacts with STK11. Interacts with NUAK1. Interacts with DTL and TRIM39. Interacts with PKP3; the interaction sequesters CDKN1A to the cytoplasm thereby repressing its role as an inhibitor of CDK4- and CDK6-driven RB1 phosphorylation. In terms of processing, phosphorylation of Thr-140 or Ser-141 impairs binding to PCNA. Phosphorylation at Ser-112 by GSK3-beta enhances ubiquitination by the DCX(DTL) complex. Phosphorylation of Thr-140 by PIM2 enhances its stability and inhibits cell proliferation. Phosphorylation of Thr-140 by PIM1 results in the relocation of CDKN1A to the cytoplasm and enhanced CDKN1A protein stability. UV radiation-induced phosphorylation at Ser-78 and Ser-141 by NUAK1 leads to its degradation. Ubiquitinated by MKRN1; leading to polyubiquitination and 26S proteasome-dependent degradation. Ubiquitinated by the DCX(DTL) complex, also named CRL4(CDT2) complex, leading to its degradation during S phase or following UV irradiation. Ubiquitination by the DCX(DTL) complex is essential to control replication licensing and is PCNA-dependent: interacts with PCNA via its PIP-box, while the presence of the containing the 'K+4' motif in the PIP box, recruit the DCX(DTL) complex, leading to its degradation. Ubiquitination at Ser-2 leads to degradation by the proteasome pathway. Ubiquitinated by RNF114; leading to proteasomal degradation. Post-translationally, acetylation leads to protein stability. Acetylated in vitro on Lys-136, Lys-149, Lys-156 and Lys-158. Deacetylation by HDAC1 is prevented by competitive binding of C10orf90/FATS to HDAC1. As to expression, expressed in keratinocytes (at protein level).

The protein resides in the cytoplasm. Its subcellular location is the nucleus. Functionally, may be involved in p53/TP53 mediated inhibition of cellular proliferation in response to DNA damage. Binds to and inhibits cyclin-dependent kinase activity, preventing phosphorylation of critical cyclin-dependent kinase substrates and blocking cell cycle progression. Functions in the nuclear localization and assembly of cyclin D-CDK4 complex and promotes its kinase activity towards RB1. At higher stoichiometric ratios, inhibits the kinase activity of the cyclin D-CDK4 complex. Inhibits DNA synthesis by DNA polymerase delta by competing with POLD3 for PCNA binding. Plays an important role in controlling cell cycle progression and DNA damage-induced G2 arrest. Its function is as follows. Plays an important role in controlling cell cycle progression and DNA damage-induced G2 arrest. Involved in p53/TP53 mediated inhibition of cellular proliferation in response to DNA damage. Also involved in p53-independent DNA damage-induced G2 arrest mediated by CREB3L1 in astrocytes and osteoblasts. Binds to and inhibits cyclin-dependent kinase activity, preventing phosphorylation of critical cyclin-dependent kinase substrates and blocking cell cycle progression. Functions in the nuclear localization and assembly of cyclin D-CDK4 complex and promotes its kinase activity towards RB1. At higher stoichiometric ratios, inhibits the kinase activity of the cyclin D-CDK4 complex. Inhibits DNA synthesis by DNA polymerase delta by competing with POLD3 for PCNA binding. Negatively regulates the CDK4- and CDK6-driven phosphorylation of RB1 in keratinocytes, thereby resulting in the release of E2F1 and subsequent transcription of E2F1-driven G1/S phase promoting genes. This chain is Cyclin-dependent kinase inhibitor 1 (Cdkn1a), found in Mus musculus (Mouse).